We begin with the raw amino-acid sequence, 141 residues long: Hemoglobin subunit alpha (141 aa).

The region spanning 1–141 (VLSAADKSNV…VSTVLTSKYR (141 aa)) is the Globin domain. S3 carries the post-translational modification Phosphoserine. N6-succinyllysine is present on residues K7 and K11. K16 carries the N6-acetyllysine; alternate modification. An N6-succinyllysine; alternate modification is found at K16. A Phosphotyrosine modification is found at Y24. S35 is subject to Phosphoserine. K40 carries the post-translational modification N6-succinyllysine. S49 is modified (phosphoserine). Residue H58 participates in O2 binding. Position 87 (H87) interacts with heme b. At S102 the chain carries Phosphoserine. Residue T108 is modified to Phosphothreonine. Position 124 is a phosphoserine (S124). Phosphothreonine occurs at positions 134 and 137. S138 is subject to Phosphoserine.

It belongs to the globin family. As to quaternary structure, heterotetramer of two alpha chains and two beta chains. In terms of tissue distribution, red blood cells.

Involved in oxygen transport from the lung to the various peripheral tissues. Functionally, hemopressin acts as an antagonist peptide of the cannabinoid receptor CNR1. Hemopressin-binding efficiently blocks cannabinoid receptor CNR1 and subsequent signaling. The sequence is that of Hemoglobin subunit alpha (HBA) from Rangifer tarandus (Reindeer).